Here is a 192-residue protein sequence, read N- to C-terminus: uncharacterized protein (192 aa).

The stretch at 53 to 111 (CLKESVERARKVYLSLLKDYERKSREYEKAYENYLKELRTYRETLYRIKEDLKFYERIC) forms a coiled coil.

This is an uncharacterized protein from Aquifex aeolicus (strain VF5).